Here is a 547-residue protein sequence, read N- to C-terminus: Signal recognition particle receptor subunit alpha homolog (547 aa).

The tract at residues 124–174 is disordered; the sequence is LENETDTKSLPVEANNDNSARKKNEYEMKKKGAQSKQTNAPKKGKKQLRKW. Residues 142-153 show a composition bias toward basic and acidic residues; the sequence is SARKKNEYEMKK. The segment at 343–546 is NG domain; it reads YTISLIGVNG…SVDWVVDQLM (204 aa). GTP is bound by residues 349-356, 437-441, and 498-501; these read GVNGVGKS, DTAGR, and SKVD.

The protein belongs to the GTP-binding SRP family. In terms of assembly, heterodimer of an alpha and a beta chain.

It localises to the endoplasmic reticulum membrane. Component of the SRP (signal recognition particle) receptor (SR). Ensures, in conjunction with the signal recognition particle, the correct targeting of the nascent secretory proteins to the endoplasmic reticulum membrane system. GTP hydrolysis may enhance the fidelity of and provide unidirectionality to the targeting reaction. The protein is Signal recognition particle receptor subunit alpha homolog (srp101) of Schizosaccharomyces pombe (strain 972 / ATCC 24843) (Fission yeast).